The primary structure comprises 218 residues: Mediator of RNA polymerase II transcription subunit 20 (218 aa).

Belongs to the Mediator complex subunit 20 family. Component of the Mediator complex.

It localises to the nucleus. Functionally, component of the Mediator complex, a coactivator involved in the regulated transcription of nearly all RNA polymerase II-dependent genes. Mediator functions as a bridge to convey information from gene-specific regulatory proteins to the basal RNA polymerase II transcription machinery. Mediator is recruited to promoters by direct interactions with regulatory proteins and serves as a scaffold for the assembly of a functional preinitiation complex with RNA polymerase II and the general transcription factors. In Anopheles gambiae (African malaria mosquito), this protein is Mediator of RNA polymerase II transcription subunit 20 (MED20).